Here is a 430-residue protein sequence, read N- to C-terminus: Adenylosuccinate synthetase (430 aa).

GTP-binding positions include 12–18 and 40–42; these read GDEGKGK and GHT. Residue Asp13 is the Proton acceptor of the active site. Mg(2+)-binding residues include Asp13 and Gly40. Residues 13–16, 38–41, Thr128, Arg142, Gln223, Thr238, and Arg302 each bind IMP; these read DEGK and NAGH. His41 functions as the Proton donor in the catalytic mechanism. Position 298 to 304 (298 to 304) interacts with substrate; the sequence is TTTGRPR. GTP is bound by residues Arg304, 330–332, and 412–414; these read SID and SVG.

It belongs to the adenylosuccinate synthetase family. As to quaternary structure, homodimer. Mg(2+) serves as cofactor.

The protein resides in the cytoplasm. The enzyme catalyses IMP + L-aspartate + GTP = N(6)-(1,2-dicarboxyethyl)-AMP + GDP + phosphate + 2 H(+). It participates in purine metabolism; AMP biosynthesis via de novo pathway; AMP from IMP: step 1/2. In terms of biological role, plays an important role in the de novo pathway of purine nucleotide biosynthesis. Catalyzes the first committed step in the biosynthesis of AMP from IMP. This Streptococcus pyogenes serotype M4 (strain MGAS10750) protein is Adenylosuccinate synthetase.